The chain runs to 149 residues: Transcriptional repressor NrdR (149 aa).

A zinc finger spans residues 3–34 (CPFCSATDTKVIDSRLVSDGHQVRRRRQCLAC). The ATP-cone domain maps to 49–139 (PKVIKSNGNR…VYRSFEDIKE (91 aa)).

The protein belongs to the NrdR family. Requires Zn(2+) as cofactor.

Negatively regulates transcription of bacterial ribonucleotide reductase nrd genes and operons by binding to NrdR-boxes. This is Transcriptional repressor NrdR from Aliivibrio fischeri (strain ATCC 700601 / ES114) (Vibrio fischeri).